The sequence spans 88 residues: uncharacterized protein (88 aa).

This is an uncharacterized protein from Sulfolobus islandicus filamentous virus (isolate Iceland/Hveragerdi) (SIFV).